A 780-amino-acid chain; its full sequence is MASVDLEKLRTTGAGKAIGVLTSGGDAQGMNAAVRAVTRMGIYVGAKVFLIYEGYEGLVEGGENIKQANWLSVSNIIQLGGTVIGSARCKAFTTREGRRAAAYNLVQRGITNLCVIGGDGSLTGANIFRSEWGSLLEELVSEGKISEGTAQTYSHLNIAGLVGSIDNDFCGTDMTIGTDSALHRIMEVIDAITTTAQSHQRTFVLEVMGRHCGYLALVSALASGADWLFIPEAPPEDGWENFMCERLGETRSRGSRLNIIIIAEGAIDRNGKPISSRYVKDLVVQRLGFDTRVTVLGHVQRGGTPSAFDRILSSKMGMEAVMALLEATPDTPACVVSLSGNQSVRLPLMECVQMTKEVQKAMDEKRFDEAIQLRGGSFENNWNIYKLLSHQKISKEKTNFSLAILNVGAPAAGMNAAVRSAVRSGISQGHTVYVVHDGFEGLAKNQVQEVSWHDVAGWLGRGGSMLGTKRTLPKGFMEKIVENIRLHNIHALLVIGGFEAYEGVLQLVEARGRYEELCIVMCVIPATISNNVPGTDFSLGSDTAVNAAMESCDRIKQSASGTKRRVFIVETMGGYCGYLATVTGIAVGADAAYVFEDPFNIQDLKANVEHMTEKMKTEIQRGLVLRNEKCHEHYTTEFLYNLYSSEGKGVFDCRTNVLGHLQQGGAPTPFDRNYGTKLGVKAIIWMSEKLRAVYRNGRVFANASDSACVIGLQKKVVAFSPVTELKKDTDFEHRMPREQWWLNLRLMLKMLAHYRISMADYVSGELEHVTRRTLSIETGF.

Position 2 is an N-acetylalanine (alanine 2). The segment at 2-390 is N-terminal catalytic PFK domain 1; that stretch reads ASVDLEKLRT…NWNIYKLLSH (389 aa). ATP contacts are provided by residues glycine 25, 88–89, and 118–121; these read RC and GDGS. Aspartate 119 provides a ligand contact to Mg(2+). Residues 164–166, arginine 201, 208–210, glutamate 264, arginine 292, and 298–301 contribute to the substrate site; these read SID, MGR, and HVQR. Aspartate 166 serves as the catalytic Proton acceptor. Serine 377 is subject to Phosphoserine. The tract at residues 391–400 is interdomain linker; sequence QKISKEKTNF. A C-terminal regulatory PFK domain 2 region spans residues 401–780; it reads SLAILNVGAP…RRTLSIETGF (380 aa). Beta-D-fructose 2,6-bisphosphate contacts are provided by residues arginine 470, 527 to 531, arginine 565, 572 to 574, and glutamate 628; these read TISNN and MGG. O-linked (GlcNAc) serine glycosylation occurs at serine 529. Position 640 is a phosphotyrosine (tyrosine 640). Beta-D-fructose 2,6-bisphosphate contacts are provided by residues arginine 654, 660–663, and arginine 734; that span reads HLQQ. The residue at position 775 (serine 775) is a Phosphoserine.

The protein belongs to the phosphofructokinase type A (PFKA) family. ATP-dependent PFK group I subfamily. Eukaryotic two domain clade 'E' sub-subfamily. As to quaternary structure, homo- and heterotetramers. Phosphofructokinase (PFK) enzyme functions as a tetramer composed of different combinations of 3 types of subunits, called PFKM (M), PFKL (L) and PFKP (P). The composition of the PFK tetramer differs according to the tissue type it is present in. The kinetic and regulatory properties of the tetrameric enzyme are dependent on the subunit composition, hence can vary across tissues. The cofactor is Mg(2+). GlcNAcylation at Ser-529 by OGT decreases enzyme activity, leading to redirect glucose flux through the oxidative pentose phosphate pathway. Glycosylation is stimulated by both hypoxia and glucose deprivation.

It localises to the cytoplasm. It carries out the reaction beta-D-fructose 6-phosphate + ATP = beta-D-fructose 1,6-bisphosphate + ADP + H(+). Its pathway is carbohydrate degradation; glycolysis; D-glyceraldehyde 3-phosphate and glycerone phosphate from D-glucose: step 3/4. Its activity is regulated as follows. Allosterically activated by ADP, AMP, or fructose 2,6-bisphosphate, and allosterically inhibited by ATP or citrate. GlcNAcylation by OGT overcomes allosteric regulation. Functionally, catalyzes the phosphorylation of D-fructose 6-phosphate to fructose 1,6-bisphosphate by ATP, the first committing step of glycolysis. Negatively regulates the phagocyte oxidative burst in response to bacterial infection by controlling cellular NADPH biosynthesis and NADPH oxidase-derived reactive oxygen species. Upon macrophage activation, drives the metabolic switch toward glycolysis, thus preventing glucose turnover that produces NADPH via pentose phosphate pathway. In Bos taurus (Bovine), this protein is ATP-dependent 6-phosphofructokinase, liver type (PFKL).